The sequence spans 2362 residues: Filaggrin-2 (2362 aa).

Residues 1–81 (MAYLLRSVVT…TEFILMIFKL (81 aa)) are S-100-like. EF-hand domains lie at 8–43 (VVTIIDVFYKYTKQDEECGTLSKDELKELLEKEFRP) and 49–84 (DDPDTVDVIMHMLDRDHDRRLDFTEFILMIFKLALA). Ca(2+) contacts are provided by Asp-62, Asp-64, Asp-66, Arg-68, and Glu-73. 2 disordered regions span residues 96–238 (ASGS…GLSC) and 284–2109 (GCCR…SSIP). Over residues 111–120 (EESETEEEEE) the composition is skewed to acidic residues. Basic and acidic residues-rich tracts occupy residues 159-174 (KRLERQDELSSSEESR) and 189-214 (NKEKDGSRSEELGEKGDKSYDSPSRE). Filaggrin repeat units follow at residues 261-308 (GYNT…NQSC) and 373-414 (HSSC…SNGF). Polar residues-rich tracts occupy residues 284 to 317 (GCCRPKNASSSCQASRSQGQGNQSCRTQSNCQSG), 342 to 375 (SCSQSSSQRGYGSKQCGQPQNCGRQQRMGSSHSS), and 383 to 395 (GATQSSGCGQQRM). A compositionally biased stretch (low complexity) spans 396 to 411 (SSCGHSSSSHQKGCSS). 2 stretches are compositionally biased toward polar residues: residues 421–443 (ASGSGHSSCCEQHGTNSSQSSGF) and 450–469 (SGQSCCGQHGTASSQSSGYS). Low complexity-rich tracts occupy residues 474-519 (GSGQ…QSSG), 539-550 (GSRQSSGSEQHG), and 567-580 (SQSSSSGHHGSGSQ). One copy of the Filaggrin 3 repeat lies at 555-607 (QSSGSGKHETGPSQSSSSGHHGSGSQQHGGGSGQSTGFGEHESSSGHSSSSGQ). Gly residues predominate over residues 581–590 (QHGGGSGQST). Over residues 599-618 (SGHSSSSGQHRSGSRHSSGS) the composition is skewed to low complexity. The span at 632–653 (GHHGSGSQQHGGGSGNSTGFGE) shows a compositional bias: gly residues. The segment covering 654-675 (HGSSSHPLPSSGQNESSSGQSS) has biased composition (low complexity). Residues 672 to 723 (GQSSRSERHGTGSGQSSGFGQHGSGSHQSSSSGHNEYGSGQTSSSWPHGKGS) form a Filaggrin 4 repeat. The span at 682–694 (TGSGQSSGFGQHG) shows a compositional bias: gly residues. Low complexity-rich tracts occupy residues 695-705 (SGSHQSSSSGH), 728-754 (GYGEQESGHGQSSSSWQHGTGPGQSSS), and 780-798 (GYGEQEAGHGQSSSSWQHG). Over residues 826 to 838 (TGSGQSLGFGQHG) the composition is skewed to gly residues. The span at 846–864 (SSGHYESVSEPSSSSWQHG) shows a compositional bias: low complexity. The stretch at 880 to 927 (HGQSSSAWNHGNESGQSNGYGEHESGHGQSSSAWNHGNESGQSNGFGE) is one Filaggrin 5 repeat. Polar residues-rich tracts occupy residues 886 to 896 (AWNHGNESGQS) and 912 to 925 (AWNHGNESGQSNGF). Over residues 973–982 (ESSEGEEHSV) the composition is skewed to basic and acidic residues. A Filaggrin 6 repeat occupies 984-1035 (PRRYSGYGHGQGQAGHQQRESGYGQRGRPQGPSQDSSRQPQAGHGQPSQSGY). The span at 1014-1035 (GPSQDSSRQPQAGHGQPSQSGY) shows a compositional bias: polar residues. A compositionally biased stretch (basic and acidic residues) spans 1047-1059 (EYSEGEAHSEVSQ). The span at 1067–1077 (CHCHCHGQARH) shows a compositional bias: basic residues. The span at 1104–1121 (GPGQPSQSGSRRSPRSQP) shows a compositional bias: low complexity. A compositionally biased stretch (gly residues) spans 1142-1152 (SGHGHGQGQGQ). Residues 1162–1174 (HGQQGRPQGPSQD) show a composition bias toward polar residues. Residues 1165–1210 (QGRPQGPSQDSSRQPQAGQGQPSQSGSGRSPRRSPVHPESSEGEEH) form a Filaggrin 7 repeat. Over residues 1175-1193 (SSRQPQAGQGQPSQSGSGR) the composition is skewed to low complexity. 3 positions are modified to phosphoserine: Ser-1198, Ser-1204, and Ser-1205. Residues 1220–1232 (SGHGHGQGQGQGQ) show a composition bias toward gly residues. Over residues 1255–1273 (SSRQPQAGQGQPSQSGSGR) the composition is skewed to low complexity. 3 positions are modified to phosphoserine: Ser-1278, Ser-1284, and Ser-1285. A Filaggrin 8 repeat occupies 1280 to 1334 (VHPESSEGEEHSVVPQRHSGSGHGHGQGQGQAGHQQRESVHGQPVRPEVPTQDSS). Gly residues predominate over residues 1300-1310 (SGHGHGQGQGQ). A compositionally biased stretch (low complexity) spans 1333-1351 (SSRQPQAGQGQPSQSGSGR). 3 positions are modified to phosphoserine: Ser-1356, Ser-1362, and Ser-1363. The span at 1377–1396 (ESCHCHCHDQAGHQQRESVH) shows a compositional bias: basic and acidic residues. The span at 1413–1436 (PQAGPGQPSQSGSRRSPRSSPVHP) shows a compositional bias: low complexity. Phosphoserine is present on residues Ser-1438 and Ser-1439. Residues 1454–1464 (SGHGHGQGQGQ) show a composition bias toward gly residues. The Filaggrin 9 repeat unit spans residues 1474–1522 (HGQRGRPQGPTQDSSRQPQAGQGQPSQSGSGRSPRRSPVHPESSEGEEH). A compositionally biased stretch (low complexity) spans 1487-1505 (SSRQPQAGQGQPSQSGSGR). A phosphoserine mark is found at Ser-1510, Ser-1516, and Ser-1517. The span at 1532–1544 (SGHGHGHGQGQGQ) shows a compositional bias: gly residues. The segment covering 1567 to 1585 (SSRQPQAGQGQPSQSGSGR) has biased composition (low complexity). Ser-1590, Ser-1596, and Ser-1597 each carry phosphoserine. Low complexity-rich tracts occupy residues 1643–1661 (SSRQPQAGQGQPSQSGSGR) and 1683–1696 (QRHSGSGHSHGQGQ). Positions 1698–1708 (HAEHQQRESVH) are enriched in basic and acidic residues. A Filaggrin 10 repeat occupies 1723-1756 (RQPQAGQGQPSLSGSGRSPRRSPVHPESSEGEEH). Low complexity predominate over residues 1724–1739 (QPQAGQGQPSLSGSGR). Ser-1744, Ser-1750, Ser-1751, Ser-1824, Ser-1830, and Ser-1831 each carry phosphoserine. Residues 1801–1825 (SSRQPQAGQGQPSQSGSGRSPGRSP) are compositionally biased toward low complexity. Residues 1829 to 1848 (ESSEGEEHSVVPQRHSESGH) are compositionally biased toward basic and acidic residues. A compositionally biased stretch (low complexity) spans 1879–1897 (SSRQPQAGQGQPSQSGSGR). 3 positions are modified to phosphoserine: Ser-1902, Ser-1908, and Ser-1909. A compositionally biased stretch (gly residues) spans 1924 to 1934 (SGHGHGQGQGQ). Residues 1949-1975 (RPQGPSQDSSSQPQASQGQPSQSGSGR) are compositionally biased toward low complexity. 3 positions are modified to phosphoserine: Ser-1980, Ser-1986, and Ser-1987. Gly residues predominate over residues 2002–2012 (SGHGHGQGQGQ). The Filaggrin 11 repeat unit spans residues 2016-2070 (QQRESLHGQRGRSQSPFHPSHSIHWQSKCTISKKSSRLSGHYGRNHFQSTISGNQ). Polar residues-rich tracts occupy residues 2026-2048 (GRSQSPFHPSHSIHWQSKCTISK), 2061-2079 (HFQSTISGNQYDSSQSSRH), and 2100-2109 (LRSNSQSSIP). Position 2104 is a phosphoserine (Ser-2104). A Filaggrin 12 repeat occupies 2218–2259 (DDSQYILFQKHLESPSFGNQSGFSPNERQLYTCNESIDSYHL).

Belongs to the S100-fused protein family. This sequence in the N-terminal section; belongs to the S-100 family. In terms of processing, deiminated by PADI1, PADI2 or PADI3 in vitro. The deiminated form is degraded by calpain-1/CAPN1 more quickly and into shorter peptides than the intact protein. May be processed by calpain-1/CAPN1.

The protein resides in the cytoplasm. It is found in the cytoplasmic granule. Functionally, essential for normal cell-cell adhesion in the cornified cell layers. Important for proper integrity and mechanical strength of the stratum corneum of the epidermis. This is Filaggrin-2 (Flg2) from Mus musculus (Mouse).